An 82-amino-acid chain; its full sequence is UPF0291 protein PEPE_0871 (82 aa).

This sequence belongs to the UPF0291 family.

The protein localises to the cytoplasm. This chain is UPF0291 protein PEPE_0871, found in Pediococcus pentosaceus (strain ATCC 25745 / CCUG 21536 / LMG 10740 / 183-1w).